The sequence spans 340 residues: DNA-directed RNA polymerase subunit alpha (340 aa).

The alpha N-terminal domain (alpha-NTD) stretch occupies residues 1 to 236; it reads MLSLSKNWNT…EQLQLFISFE (236 aa). The tract at residues 251–340 is alpha C-terminal domain (alpha-CTD); sequence FAPYLLKRVD…LSKRYEDSYN (90 aa).

Belongs to the RNA polymerase alpha chain family. Homodimer. The RNAP catalytic core consists of 2 alpha, 1 beta, 1 beta' and 1 omega subunit. When a sigma factor is associated with the core the holoenzyme is formed, which can initiate transcription.

It carries out the reaction RNA(n) + a ribonucleoside 5'-triphosphate = RNA(n+1) + diphosphate. In terms of biological role, DNA-dependent RNA polymerase catalyzes the transcription of DNA into RNA using the four ribonucleoside triphosphates as substrates. The protein is DNA-directed RNA polymerase subunit alpha of Rickettsia peacockii (strain Rustic).